A 466-amino-acid polypeptide reads, in one-letter code: Asparagine--tRNA ligase (466 aa).

This sequence belongs to the class-II aminoacyl-tRNA synthetase family. Homodimer.

The protein resides in the cytoplasm. It catalyses the reaction tRNA(Asn) + L-asparagine + ATP = L-asparaginyl-tRNA(Asn) + AMP + diphosphate + H(+). In Escherichia coli O157:H7, this protein is Asparagine--tRNA ligase.